A 659-amino-acid chain; its full sequence is MSDDNLISRPLTAGAHVSLRSMQEVAMNDRNASKMLSTYNVAYWGGNYYDVNELGHISVCPDPDIREARVDLAQLVKKMQLEQGQRLPALFCFPQILQHRLRSINAAFKRARESFGYEGGYFLVYPIKVNQHRRVIESLVNSGEPLGLEAGSKAEMMAVLAHAGMTRSVIVCNGYKDREYIRLALIGEKLGHKVYLVIEKMSEIKMVLEEAERLNVVPRLGVRARLASQGSGKWQASGGEKSKFGLSATQVLQLVDMLREANSLESLQLLHFHLGSQLSNIRDISTGVRESARFYVELHKLGVNIQCFDVGGGLGVDYEGTRSQSDCSVNYGLNEYANNVIWGIGDACNEHGLPHPTVITESGRAVTAHHTVLVSNVIGVERNEFCEPQPPEAGAPRALESLWDTWQEMQEPENRRSLREWLHDSQMDLHDVHTQYAHGMLDLTHRAWAEQLYLSICNEIQKQLDPSNRAHRPIIDELQERMADKLYVNFSLFQSMPDAWGIDQLFPVLPLEGLDKPPERRAVLLDITCDSDGTIDHYIDGDGVATTMPMPPYDPENPPLLGFFMVGAYQEILGNMHNLFGDTAAVDVYVFPDGTVEVEQTDEGDTVADMLEYVQLNPEKLLEHFRGQVKETDLDTELQAQFLEEFEAGLYGYTYLEDE.

At K128 the chain carries N6-(pyridoxal phosphate)lysine. Residue 308–318 (FDVGGGLGVDY) coordinates substrate.

It belongs to the Orn/Lys/Arg decarboxylase class-II family. SpeA subfamily. Mg(2+) serves as cofactor. It depends on pyridoxal 5'-phosphate as a cofactor.

It carries out the reaction L-arginine + H(+) = agmatine + CO2. The protein operates within amine and polyamine biosynthesis; agmatine biosynthesis; agmatine from L-arginine: step 1/1. In terms of biological role, catalyzes the biosynthesis of agmatine from arginine. In Yersinia pestis, this protein is Biosynthetic arginine decarboxylase.